Reading from the N-terminus, the 125-residue chain is Profilin-P (125 aa).

N-acetylserine is present on serine 2.

Belongs to the profilin family. Occurs in many kinds of cells as a complex with monomeric actin in a 1:1 ratio.

It localises to the cytoplasm. The protein resides in the cytoskeleton. Its function is as follows. Binds to actin and affects the structure of the cytoskeleton. At high concentrations, profilin prevents the polymerization of actin, whereas it enhances it at low concentrations. By binding to PIP2, it inhibits the formation of IP3 and DG. The polypeptide is Profilin-P (PROP) (Physarum polycephalum (Slime mold)).